The sequence spans 440 residues: L-seryl-tRNA(Sec) selenium transferase (440 aa).

Position 282 is an N6-(pyridoxal phosphate)lysine (Lys-282).

Belongs to the SelA family. The cofactor is pyridoxal 5'-phosphate.

It is found in the cytoplasm. The enzyme catalyses L-seryl-tRNA(Sec) + selenophosphate + H(+) = L-selenocysteinyl-tRNA(Sec) + phosphate. It participates in aminoacyl-tRNA biosynthesis; selenocysteinyl-tRNA(Sec) biosynthesis; selenocysteinyl-tRNA(Sec) from L-seryl-tRNA(Sec) (bacterial route): step 1/1. Its function is as follows. Converts seryl-tRNA(Sec) to selenocysteinyl-tRNA(Sec) required for selenoprotein biosynthesis. The protein is L-seryl-tRNA(Sec) selenium transferase of Campylobacter jejuni subsp. jejuni serotype O:2 (strain ATCC 700819 / NCTC 11168).